The chain runs to 325 residues: Helicase VP6-A (325 aa).

Disordered regions lie at residues 1-126 (MLLA…TNGR) and 175-231 (GVAE…PARI). 4 stretches are compositionally biased toward basic and acidic residues: residues 8 to 18 (VIKRSSEELKQ), 32 to 54 (EGGKEDKTEPKEESKAEGSKDGE), 61 to 79 (GQKEEGGKETKDADVDRRI), and 92 to 105 (PGERANENADRGDG). An ATP-binding site is contributed by K106. Over residues 106-122 (KVGGGGGDADAGVGATG) the composition is skewed to gly residues. Residues 175 to 229 (GVAEQTERLRDLRRKEKNGTHAKAVERGGRKQRKESHGDAQREGVEEEKTSEEPA) show a composition bias toward basic and acidic residues.

Belongs to the orbivirus VP6 family. As to quaternary structure, homohexamer.

It is found in the virion. The catalysed reaction is ATP + H2O = ADP + phosphate + H(+). Functionally, ATP dependent RNA helicase essential for RNA packaging and viral transcription. Possesses ss- and dsRNA-binding capacity. The protein is Helicase VP6-A (Segment-9) of Bluetongue virus 11 (isolate USA) (BTV 11).